The following is a 256-amino-acid chain: Probable ATP-dependent transporter slr0075 (256 aa).

The region spanning Leu6–Glu250 is the ABC transporter domain. Gly38–Ser45 is a binding site for ATP.

The protein belongs to the ABC transporter superfamily. Ycf16 family.

The sequence is that of Probable ATP-dependent transporter slr0075 from Synechocystis sp. (strain ATCC 27184 / PCC 6803 / Kazusa).